A 342-amino-acid chain; its full sequence is Autoinducer 2 import system permease protein LsrC (342 aa).

Residues 1 to 13 are Periplasmic-facing; sequence MLKFIQNNREITA. Residues 14–34 traverse the membrane as a helical segment; it reads LLAVVLLFVLPGFLDRQYLSV. Over 35–38 the chain is Cytoplasmic; it reads QTLT. The helical transmembrane segment at 39-59 threads the bilayer; the sequence is MVYSSAQILILLAMGATLVML. The Periplasmic portion of the chain corresponds to 60–69; it reads TRNIDVSVGS. A helical transmembrane segment spans residues 70-90; it reads ITGMCAVLLGMLLNAGYSLPV. Over 91–92 the chain is Cytoplasmic; sequence AC. A helical transmembrane segment spans residues 93–113; the sequence is VTTLLLGLLAGFFNGVLVAWL. A topological domain (periplasmic) is located at residue lysine 114. Residues 115–135 traverse the membrane as a helical segment; it reads IPAIVATLGTLGLYRGIMLLW. The Cytoplasmic portion of the chain corresponds to 136 to 154; it reads TGGKWIEGLPAELKQLSAP. A helical transmembrane segment spans residues 155-175; sequence LLFGVSAIGWLTIILVAFMAW. The Periplasmic segment spans residues 176 to 212; sequence LLAKTAFGRSFYATGDNLQGARQLGVRTEAIRIVAFS. The helical transmembrane segment at 213 to 233 threads the bilayer; it reads LNGCMAALAGIVFASQIGFIP. At 234 to 251 the chain is on the cytoplasmic side; the sequence is NQTGTGLEMKAIAACVLG. A helical transmembrane segment spans residues 252–272; sequence GISLLGGSGAIIGAVLGAWFL. Residues 273 to 283 are Periplasmic-facing; sequence TQIDSVLVLLR. A helical membrane pass occupies residues 284–304; the sequence is IPAWWNDFIAGLVLLAVLVFD. Residues 305–342 are Cytoplasmic-facing; that stretch reads GRLRCALERNLRRQKYARFMTPPPSVKPASSGKKREAA.

This sequence belongs to the binding-protein-dependent transport system permease family. AraH/RbsC subfamily. The complex is composed of two ATP-binding proteins (LsrA), two transmembrane proteins (LsrC and LsrD) and a solute-binding protein (LsrB).

It is found in the cell inner membrane. Part of the ABC transporter complex LsrABCD involved in autoinducer 2 (AI-2) import. Probably responsible for the translocation of the substrate across the membrane. This Escherichia coli O9:H4 (strain HS) protein is Autoinducer 2 import system permease protein LsrC (lsrC).